We begin with the raw amino-acid sequence, 295 residues long: Spermatogenesis-associated protein 4 (295 aa).

Residues 1–34 (MAAAGQAEECLPLPAAESSKTSLPTPPAVPAGKK) are disordered. Positions 48–154 (SRLSRSVLRW…QEIYTLLTHQ (107 aa)) constitute a Calponin-homology (CH) domain. Positions 251-295 (KRRYKSRGSKEKAAQPLSKSDNDGNARKEIHVKQSGNPCENTENL) are disordered. Over residues 270–282 (SDNDGNARKEIHV) the composition is skewed to basic and acidic residues. Over residues 284–295 (QSGNPCENTENL) the composition is skewed to polar residues.

As to expression, testis.

The protein localises to the nucleus. In terms of biological role, may play a role in apoptosis regulation. In Mus musculus (Mouse), this protein is Spermatogenesis-associated protein 4 (Spata4).